The primary structure comprises 425 residues: Serine--tRNA ligase (425 aa).

L-serine is bound at residue 231–233; that stretch reads TAE. 262-264 provides a ligand contact to ATP; sequence RSE. Residue Glu-285 participates in L-serine binding. ATP is bound at residue 349 to 352; it reads EISS. Residue Ser-385 coordinates L-serine.

This sequence belongs to the class-II aminoacyl-tRNA synthetase family. Type-1 seryl-tRNA synthetase subfamily. Homodimer. The tRNA molecule binds across the dimer.

Its subcellular location is the cytoplasm. The enzyme catalyses tRNA(Ser) + L-serine + ATP = L-seryl-tRNA(Ser) + AMP + diphosphate + H(+). It carries out the reaction tRNA(Sec) + L-serine + ATP = L-seryl-tRNA(Sec) + AMP + diphosphate + H(+). Its pathway is aminoacyl-tRNA biosynthesis; selenocysteinyl-tRNA(Sec) biosynthesis; L-seryl-tRNA(Sec) from L-serine and tRNA(Sec): step 1/1. Functionally, catalyzes the attachment of serine to tRNA(Ser). Is also able to aminoacylate tRNA(Sec) with serine, to form the misacylated tRNA L-seryl-tRNA(Sec), which will be further converted into selenocysteinyl-tRNA(Sec). In Alkaliphilus oremlandii (strain OhILAs) (Clostridium oremlandii (strain OhILAs)), this protein is Serine--tRNA ligase.